Here is a 439-residue protein sequence, read N- to C-terminus: Argininosuccinate lyase (439 aa).

The protein belongs to the lyase 1 family. Argininosuccinate lyase subfamily.

The protein localises to the cytoplasm. The catalysed reaction is 2-(N(omega)-L-arginino)succinate = fumarate + L-arginine. It functions in the pathway amino-acid biosynthesis; L-arginine biosynthesis; L-arginine from L-ornithine and carbamoyl phosphate: step 3/3. The protein is Argininosuccinate lyase of Caldanaerobacter subterraneus subsp. tengcongensis (strain DSM 15242 / JCM 11007 / NBRC 100824 / MB4) (Thermoanaerobacter tengcongensis).